Consider the following 188-residue polypeptide: Apolipoprotein M (188 aa).

Positions 1-22 (MFHQIWAALLYLYGILLNSIYQ) form a signal peptide, not cleaved. 3 cysteine pairs are disulfide-bonded: Cys-23-Cys-167, Cys-95-Cys-183, and Cys-128-Cys-157. Positions 136 and 143 each coordinate tetradecanoate.

The protein belongs to the calycin superfamily. Lipocalin family. Highly divergent. In terms of assembly, interacts with LRP2; LRP2 mediates APOM renal uptake and subsequent lysosomal degradation.

Its subcellular location is the secreted. Functionally, probably involved in lipid transport. Can bind sphingosine-1-phosphate, myristic acid, palmitic acid and stearic acid, retinol, all-trans-retinoic acid and 9-cis-retinoic acid. This chain is Apolipoprotein M (APOM), found in Sus scrofa (Pig).